A 90-amino-acid polypeptide reads, in one-letter code: DNA-binding protein HU (90 aa).

The protein belongs to the bacterial histone-like protein family. As to quaternary structure, homodimer.

Its function is as follows. Histone-like DNA-binding protein which is capable of wrapping DNA to stabilize it, and thus to prevent its denaturation under extreme environmental conditions. In Staphylococcus aureus (strain COL), this protein is DNA-binding protein HU (hup).